Consider the following 428-residue polypeptide: Flotillin-2a (428 aa).

S-palmitoyl cysteine attachment occurs at residues cysteine 4, cysteine 19, and cysteine 20.

This sequence belongs to the band 7/mec-2 family. Flotillin subfamily. As to quaternary structure, heterooligomer; Heterooligomerizes with ic complex of flotillins 1 and 2. Palmitoylation may be required for the formation of higher order complexes and for neurite outgrowth in cultured neural stem cells.

It localises to the membrane. The protein localises to the endosome. In terms of biological role, may play a role in axon growth and regeneration. May be involved in epidermal cell adhesion and epidermal structure and function. The chain is Flotillin-2a (flot2a) from Danio rerio (Zebrafish).